We begin with the raw amino-acid sequence, 243 residues long: Adenosylcobinamide-GDP ribazoletransferase (243 aa).

Transmembrane regions (helical) follow at residues 33 to 53 (FLPVIGLLIGILMYLPTLLAP), 59 to 79 (IIIVSIWALYFLITGGLHIDG), 105 to 125 (IGAFGVLGILWLLILNLTLAY), 127 to 147 (TENMLLLLVPVVGRASAVFAA), 172 to 192 (VISIAFSLLLGSMVSIKGAII), and 223 to 243 (TIEISQTLFMLSAYLLKSIII).

Belongs to the CobS family. Mg(2+) is required as a cofactor.

It is found in the cell membrane. The catalysed reaction is alpha-ribazole + adenosylcob(III)inamide-GDP = adenosylcob(III)alamin + GMP + H(+). It carries out the reaction alpha-ribazole 5'-phosphate + adenosylcob(III)inamide-GDP = adenosylcob(III)alamin 5'-phosphate + GMP + H(+). Its pathway is cofactor biosynthesis; adenosylcobalamin biosynthesis; adenosylcobalamin from cob(II)yrinate a,c-diamide: step 7/7. In terms of biological role, joins adenosylcobinamide-GDP and alpha-ribazole to generate adenosylcobalamin (Ado-cobalamin). Also synthesizes adenosylcobalamin 5'-phosphate from adenosylcobinamide-GDP and alpha-ribazole 5'-phosphate. The polypeptide is Adenosylcobinamide-GDP ribazoletransferase (Alkaliphilus oremlandii (strain OhILAs) (Clostridium oremlandii (strain OhILAs))).